Consider the following 717-residue polypeptide: Methylcrotonoyl-CoA carboxylase subunit alpha, mitochondrial (717 aa).

The transit peptide at 1 to 38 (MAAAALLAAVDRNQLRRVPILLLQPREWAWKLRTMKYG) directs the protein to the mitochondrion. A Biotin carboxylation domain is found at 45-490 (ITKVLIANRG…HTDFIPQHHK (446 aa)). Lys159 is a binding site for ATP. Residues 163–360 (KSIMAAAGVP…LVEWQLRIAA (198 aa)) form the ATP-grasp domain. N6-acetyllysine is present on residues Lys180 and Lys193. Residues Lys201 and 207 to 208 (GG) each bind ATP. Position 233 is an N6-acetyllysine (Lys233). ATP contacts are provided by His251, His278, and Glu318. Arg335 is a catalytic residue. At Lys490 the chain carries N6-acetyllysine. Lys577 carries the post-translational modification N6-acetyllysine; alternate. Position 577 is an N6-succinyllysine; alternate (Lys577). Residues 622–711 (SIEVGIPVPK…NRHAPLVEFE (90 aa)) form the Biotinyl-binding domain. An N6-biotinyllysine modification is found at Lys677.

As to quaternary structure, probably a dodecamer composed of six biotin-containing alpha subunits (MCCC1) and six beta (MCCC2) subunits. Interacts (via the biotin carboxylation domain) with SIRT4. It depends on biotin as a cofactor. In terms of processing, acetylated.

The protein resides in the mitochondrion matrix. The enzyme catalyses 3-methylbut-2-enoyl-CoA + hydrogencarbonate + ATP = 3-methyl-(2E)-glutaconyl-CoA + ADP + phosphate + H(+). Its pathway is amino-acid degradation; L-leucine degradation; (S)-3-hydroxy-3-methylglutaryl-CoA from 3-isovaleryl-CoA: step 2/3. In terms of biological role, biotin-attachment subunit of the 3-methylcrotonyl-CoA carboxylase, an enzyme that catalyzes the conversion of 3-methylcrotonyl-CoA to 3-methylglutaconyl-CoA, a critical step for leucine and isovaleric acid catabolism. The polypeptide is Methylcrotonoyl-CoA carboxylase subunit alpha, mitochondrial (Mccc1) (Mus musculus (Mouse)).